We begin with the raw amino-acid sequence, 330 residues long: DNA-directed RNA polymerase subunit alpha (330 aa).

Residues 1-236 form an alpha N-terminal domain (alpha-NTD) region; sequence MQGSVTEFLK…EQLDAFVDLR (236 aa). Residues 250-330 form an alpha C-terminal domain (alpha-CTD) region; the sequence is FDPILLRPVD…NWPPASIAED (81 aa).

It belongs to the RNA polymerase alpha chain family. In terms of assembly, homodimer. The RNAP catalytic core consists of 2 alpha, 1 beta, 1 beta' and 1 omega subunit. When a sigma factor is associated with the core the holoenzyme is formed, which can initiate transcription.

The enzyme catalyses RNA(n) + a ribonucleoside 5'-triphosphate = RNA(n+1) + diphosphate. In terms of biological role, DNA-dependent RNA polymerase catalyzes the transcription of DNA into RNA using the four ribonucleoside triphosphates as substrates. This Vibrio parahaemolyticus serotype O3:K6 (strain RIMD 2210633) protein is DNA-directed RNA polymerase subunit alpha.